The chain runs to 212 residues: Protein-L-isoaspartate O-methyltransferase (212 aa).

Residue Ser-62 is part of the active site.

It belongs to the methyltransferase superfamily. L-isoaspartyl/D-aspartyl protein methyltransferase family.

It localises to the cytoplasm. The enzyme catalyses [protein]-L-isoaspartate + S-adenosyl-L-methionine = [protein]-L-isoaspartate alpha-methyl ester + S-adenosyl-L-homocysteine. Its function is as follows. Catalyzes the methyl esterification of L-isoaspartyl residues in peptides and proteins that result from spontaneous decomposition of normal L-aspartyl and L-asparaginyl residues. It plays a role in the repair and/or degradation of damaged proteins. The polypeptide is Protein-L-isoaspartate O-methyltransferase (Pseudoalteromonas translucida (strain TAC 125)).